The following is a 616-amino-acid chain: Chaperone protein HscA (616 aa).

This sequence belongs to the heat shock protein 70 family.

Chaperone involved in the maturation of iron-sulfur cluster-containing proteins. Has a low intrinsic ATPase activity which is markedly stimulated by HscB. Involved in the maturation of IscU. The sequence is that of Chaperone protein HscA from Edwardsiella ictaluri (strain 93-146).